The sequence spans 249 residues: Ubiquinone biosynthesis protein COQ4 homolog, mitochondrial (249 aa).

4 residues coordinate Zn(2+): His134, Asp135, His138, and Glu150.

Belongs to the COQ4 family. Component of a multi-subunit COQ enzyme complex. The cofactor is Zn(2+).

It localises to the mitochondrion inner membrane. It carries out the reaction a 4-hydroxy-3-methoxy-5-(all-trans-polyprenyl)benzoate + H(+) = a 2-methoxy-6-(all-trans-polyprenyl)phenol + CO2. It participates in cofactor biosynthesis; ubiquinone biosynthesis. Functionally, lyase that catalyzes the C1-decarboxylation of 4-hydroxy-3-methoxy-5-(all-trans-polyprenyl)benzoic acid into 2-methoxy-6-(all-trans-polyprenyl)phenol during ubiquinone biosynthesis. In Trypanosoma brucei brucei (strain 927/4 GUTat10.1), this protein is Ubiquinone biosynthesis protein COQ4 homolog, mitochondrial.